A 69-amino-acid polypeptide reads, in one-letter code: Pantinin-1 (69 aa).

The first 23 residues, M1–G23, serve as a signal peptide directing secretion. V37 is modified (valine amide). A propeptide spanning residues G41–K69 is cleaved from the precursor.

This sequence belongs to the non-disulfide-bridged peptide (NDBP) superfamily. Short antimicrobial peptide (group 4) family. Expressed by the venom gland.

It localises to the secreted. It is found in the target cell membrane. Functionally, amphipathic peptide that possesses relatively strong activities against Gram-positive bacteria and a fungus, but has very weak antimicrobial activities against Gram-negative bacteria. Also exhibits very low hemolytic activities against human erythrocytes (64 uM induce 21% of hemolysis). Minimal inhibitory concentration (MIC) are the following: 8 uM against S.aureus, 32 uM against B.magaterium, 32 uM against M.luteus, 28 uM against vancomycin-resistant Enterococci, 14 uM against methicillin-resistant S.aureus, 62 uM against E.coli, &gt;87 uM against P.putida, &gt;87 uM against K.oxytoca, 76 uM against E.cloacae, 72 uM against S.enterica and 16 uM against the fungus C.tropicalis. This Pandinus imperator (Emperor scorpion) protein is Pantinin-1.